The following is a 200-amino-acid chain: Orotate phosphoribosyltransferase (200 aa).

5-phospho-alpha-D-ribose 1-diphosphate contacts are provided by residues Arg95, Lys99, His101, and Asp121–Ser129. Orotate contacts are provided by Thr125 and Arg153.

The protein belongs to the purine/pyrimidine phosphoribosyltransferase family. PyrE subfamily. As to quaternary structure, homodimer. It depends on Mg(2+) as a cofactor.

The catalysed reaction is orotidine 5'-phosphate + diphosphate = orotate + 5-phospho-alpha-D-ribose 1-diphosphate. Its pathway is pyrimidine metabolism; UMP biosynthesis via de novo pathway; UMP from orotate: step 1/2. In terms of biological role, catalyzes the transfer of a ribosyl phosphate group from 5-phosphoribose 1-diphosphate to orotate, leading to the formation of orotidine monophosphate (OMP). In Cenarchaeum symbiosum (strain A), this protein is Orotate phosphoribosyltransferase.